Here is a 686-residue protein sequence, read N- to C-terminus: tRNA wybutosine-synthesizing protein 4 (686 aa).

A disordered region spans residues 1-22 (MGPRSRQRRTGTVQSTNDSSSL). Residues 10 to 22 (TGTVQSTNDSSSL) show a composition bias toward polar residues. S-adenosyl-L-methionine is bound by residues arginine 59, glycine 89, aspartate 114, 161–162 (DL), and glutamate 188.

This sequence belongs to the methyltransferase superfamily. LCMT family. As to quaternary structure, interacts with RNF144B/IBRDC2.

It carries out the reaction 7-[(3S)-3-amino-3-carboxypropyl]wyosine(37) in tRNA(Phe) + S-adenosyl-L-methionine = 7-[(3S)-(3-amino-3-methoxycarbonyl)propyl]wyosine(37) in tRNA(Phe) + S-adenosyl-L-homocysteine. It catalyses the reaction 7-[(3S)-(3-amino-3-methoxycarbonyl)propyl]wyosine(37) in tRNA(Phe) + S-adenosyl-L-methionine + CO2 = wybutosine(37) in tRNA(Phe) + S-adenosyl-L-homocysteine + 2 H(+). It functions in the pathway tRNA modification; wybutosine-tRNA(Phe) biosynthesis. In terms of biological role, probable S-adenosyl-L-methionine-dependent methyltransferase that acts as a component of the wybutosine biosynthesis pathway. Wybutosine is a hyper modified guanosine with a tricyclic base found at the 3'-position adjacent to the anticodon of eukaryotic phenylalanine tRNA. May methylate the carboxyl group of leucine residues to form alpha-leucine ester residues. The protein is tRNA wybutosine-synthesizing protein 4 (Lcmt2) of Rattus norvegicus (Rat).